A 65-amino-acid polypeptide reads, in one-letter code: Large ribosomal subunit protein uL29 (65 aa).

It belongs to the universal ribosomal protein uL29 family.

This Mycoplasmopsis synoviae (strain 53) (Mycoplasma synoviae) protein is Large ribosomal subunit protein uL29.